Here is a 400-residue protein sequence, read N- to C-terminus: Chalcone synthase WHP1 (400 aa).

Cys167 is an active-site residue.

Belongs to the thiolase-like superfamily. Chalcone/stilbene synthases family.

It carries out the reaction (E)-4-coumaroyl-CoA + 3 malonyl-CoA + 3 H(+) = 2',4,4',6'-tetrahydroxychalcone + 3 CO2 + 4 CoA. It functions in the pathway secondary metabolite biosynthesis; flavonoid biosynthesis. In terms of biological role, the primary product of this enzyme is 4,2',4',6'-tetrahydroxychalcone (also termed naringenin-chalcone or chalcone) which can under specific conditions spontaneously isomerize into naringenin. The chain is Chalcone synthase WHP1 (WHP1) from Zea mays (Maize).